The following is a 653-amino-acid chain: Macrolide export ATP-binding/permease protein MacB (653 aa).

The region spanning 6–244 is the ABC transporter domain; it reads IELQGVSRSY…PPLLPCSAHP (239 aa). 42-49 is a binding site for ATP; that stretch reads GSSGSGKS. The next 4 helical transmembrane spans lie at 275-295, 525-545, 576-596, and 616-636; these read LLTMAGIVFGIAAVVTVVGLG, FSVLITMVAMIALFIGSLGVM, FLIEAVLVCLTGGLLGVLLAL, and WPAVSGAFLCACAIGMVFGYW.

Belongs to the ABC transporter superfamily. Macrolide exporter (TC 3.A.1.122) family. Homodimer. Part of the tripartite efflux system MacAB-TolC, which is composed of an inner membrane transporter, MacB, a periplasmic membrane fusion protein, MacA, and an outer membrane component, TolC. The complex forms a large protein conduit and can translocate molecules across both the inner and outer membranes. Interacts with MacA.

Its subcellular location is the cell inner membrane. Its function is as follows. Part of the tripartite efflux system MacAB-TolC. MacB is a non-canonical ABC transporter that contains transmembrane domains (TMD), which form a pore in the inner membrane, and an ATP-binding domain (NBD), which is responsible for energy generation. Confers resistance against macrolides. This chain is Macrolide export ATP-binding/permease protein MacB, found in Sodalis glossinidius (strain morsitans).